Reading from the N-terminus, the 282-residue chain is 4-hydroxy-3-methylbut-2-enyl diphosphate reductase (282 aa).

A [4Fe-4S] cluster-binding site is contributed by Cys12. (2E)-4-hydroxy-3-methylbut-2-enyl diphosphate is bound by residues His40 and His72. Dimethylallyl diphosphate is bound by residues His40 and His72. The isopentenyl diphosphate site is built by His40 and His72. A [4Fe-4S] cluster-binding site is contributed by Cys94. (2E)-4-hydroxy-3-methylbut-2-enyl diphosphate is bound at residue His122. Dimethylallyl diphosphate is bound at residue His122. His122 is a binding site for isopentenyl diphosphate. Glu124 (proton donor) is an active-site residue. Thr160 provides a ligand contact to (2E)-4-hydroxy-3-methylbut-2-enyl diphosphate. [4Fe-4S] cluster is bound at residue Cys188. (2E)-4-hydroxy-3-methylbut-2-enyl diphosphate contacts are provided by Ser216, Asn218, and Ser260. Dimethylallyl diphosphate-binding residues include Ser216, Asn218, and Ser260. Isopentenyl diphosphate is bound by residues Ser216, Asn218, and Ser260.

Belongs to the IspH family. It depends on [4Fe-4S] cluster as a cofactor.

The catalysed reaction is isopentenyl diphosphate + 2 oxidized [2Fe-2S]-[ferredoxin] + H2O = (2E)-4-hydroxy-3-methylbut-2-enyl diphosphate + 2 reduced [2Fe-2S]-[ferredoxin] + 2 H(+). It carries out the reaction dimethylallyl diphosphate + 2 oxidized [2Fe-2S]-[ferredoxin] + H2O = (2E)-4-hydroxy-3-methylbut-2-enyl diphosphate + 2 reduced [2Fe-2S]-[ferredoxin] + 2 H(+). Its pathway is isoprenoid biosynthesis; dimethylallyl diphosphate biosynthesis; dimethylallyl diphosphate from (2E)-4-hydroxy-3-methylbutenyl diphosphate: step 1/1. The protein operates within isoprenoid biosynthesis; isopentenyl diphosphate biosynthesis via DXP pathway; isopentenyl diphosphate from 1-deoxy-D-xylulose 5-phosphate: step 6/6. Catalyzes the conversion of 1-hydroxy-2-methyl-2-(E)-butenyl 4-diphosphate (HMBPP) into a mixture of isopentenyl diphosphate (IPP) and dimethylallyl diphosphate (DMAPP). Acts in the terminal step of the DOXP/MEP pathway for isoprenoid precursor biosynthesis. The sequence is that of 4-hydroxy-3-methylbut-2-enyl diphosphate reductase from Geotalea daltonii (strain DSM 22248 / JCM 15807 / FRC-32) (Geobacter daltonii).